The chain runs to 274 residues: Large ribosomal subunit protein uL2 (274 aa).

Residues 1 to 23 (MAIKIYRPTSPGRRHHSVSSFEE) form a disordered region.

It belongs to the universal ribosomal protein uL2 family. In terms of assembly, part of the 50S ribosomal subunit. Forms a bridge to the 30S subunit in the 70S ribosome.

In terms of biological role, one of the primary rRNA binding proteins. Required for association of the 30S and 50S subunits to form the 70S ribosome, for tRNA binding and peptide bond formation. It has been suggested to have peptidyltransferase activity; this is somewhat controversial. Makes several contacts with the 16S rRNA in the 70S ribosome. The polypeptide is Large ribosomal subunit protein uL2 (Dehalococcoides mccartyi (strain ATCC BAA-2100 / JCM 16839 / KCTC 5957 / BAV1)).